A 174-amino-acid polypeptide reads, in one-letter code: Gamma-crystallin C (174 aa).

Beta/gamma crystallin 'Greek key' domains follow at residues G2–S40 and G41–P83. C23 carries the post-translational modification S-methylcysteine. A connecting peptide region spans residues Q84 to S87. Beta/gamma crystallin 'Greek key' domains are found at residues H88–E128 and G129–V171.

This sequence belongs to the beta/gamma-crystallin family. As to quaternary structure, monomer.

Functionally, crystallins are the dominant structural components of the vertebrate eye lens. The sequence is that of Gamma-crystallin C (CRYGC) from Homo sapiens (Human).